The primary structure comprises 176 residues: Dual-action ribosomal maturation protein DarP (176 aa).

Belongs to the DarP family.

It is found in the cytoplasm. Its function is as follows. Member of a network of 50S ribosomal subunit biogenesis factors which assembles along the 30S-50S interface, preventing incorrect 23S rRNA structures from forming. Promotes peptidyl transferase center (PTC) maturation. This is Dual-action ribosomal maturation protein DarP from Aliivibrio fischeri (strain MJ11) (Vibrio fischeri).